A 206-amino-acid polypeptide reads, in one-letter code: Thymidylate kinase (206 aa).

11 to 18 (GIDGAGKT) provides a ligand contact to ATP.

This sequence belongs to the thymidylate kinase family.

It carries out the reaction dTMP + ATP = dTDP + ADP. In terms of biological role, phosphorylation of dTMP to form dTDP in both de novo and salvage pathways of dTTP synthesis. In Paraburkholderia xenovorans (strain LB400), this protein is Thymidylate kinase.